A 403-amino-acid polypeptide reads, in one-letter code: Histidine--tRNA ligase (403 aa).

This sequence belongs to the class-II aminoacyl-tRNA synthetase family. As to quaternary structure, homodimer.

It localises to the cytoplasm. It carries out the reaction tRNA(His) + L-histidine + ATP = L-histidyl-tRNA(His) + AMP + diphosphate + H(+). The sequence is that of Histidine--tRNA ligase from Sulfurovum sp. (strain NBC37-1).